The chain runs to 157 residues: UPF0262 protein Rleg2_0240 (157 aa).

This sequence belongs to the UPF0262 family.

This Rhizobium leguminosarum bv. trifolii (strain WSM2304) protein is UPF0262 protein Rleg2_0240.